Here is a 248-residue protein sequence, read N- to C-terminus: Ubiquinone/menaquinone biosynthesis C-methyltransferase UbiE (248 aa).

Residues serine 68 and aspartate 92 each coordinate S-adenosyl-L-methionine.

It belongs to the class I-like SAM-binding methyltransferase superfamily. MenG/UbiE family.

The catalysed reaction is a 2-demethylmenaquinol + S-adenosyl-L-methionine = a menaquinol + S-adenosyl-L-homocysteine + H(+). The enzyme catalyses a 2-methoxy-6-(all-trans-polyprenyl)benzene-1,4-diol + S-adenosyl-L-methionine = a 5-methoxy-2-methyl-3-(all-trans-polyprenyl)benzene-1,4-diol + S-adenosyl-L-homocysteine + H(+). Its pathway is quinol/quinone metabolism; menaquinone biosynthesis; menaquinol from 1,4-dihydroxy-2-naphthoate: step 2/2. It participates in cofactor biosynthesis; ubiquinone biosynthesis. In terms of biological role, methyltransferase required for the conversion of demethylmenaquinol (DMKH2) to menaquinol (MKH2) and the conversion of 2-polyprenyl-6-methoxy-1,4-benzoquinol (DDMQH2) to 2-polyprenyl-3-methyl-6-methoxy-1,4-benzoquinol (DMQH2). In Rickettsia bellii (strain RML369-C), this protein is Ubiquinone/menaquinone biosynthesis C-methyltransferase UbiE.